A 560-amino-acid polypeptide reads, in one-letter code: MDIKRTILIVALAIVSYVMVLKWNQDYGQAALPTQNVATNQAAPAIPDTPLGNNASASADVPSANGETSAPLETPVVTNKDLIHVKTDVLDLAIDPQGGDIAQLKLPLYPRRQDHPDVPFQLFDNGGERTYLAQSGLTGTNGPDARATGRPVYSTEQKTYQLADGQNQLNVDLKFSLDGVNYIKRFSFTRGLYDLKVTYLIDNESGKPWSGNLFAQLKRDASSDPSSSTATGTATYLGAALWTSNEPYKKVSMKDIDKGSLKETVQGGWVAWLQHYFVTAWIPNKGDANLVQTRKDSQGNYIIGFTGPALTVAPGAKAETSATLYAGPKSQAVLKELSPGLELTVDYGFLWFIAQPIFWLLQHIHSIVGNWGWSIIFLTMLIKGIFFPLSAASYKSMARMRAVAPKLAALKEQHGDDRQKMSQAMMELYKKEKINPLGGCLPILVQMPVFLSLYWVLLESVEMRQAPFMLWITDLSIKDPFFILPIIMGATMFIQQRLNPTPPDPMQAKVMKMMPIIFTFFFLWFPAGLVLYWVVNNVLSISQQWYITRKIEAATAKAAA.

The helical transmembrane segment at Ile7 to Tyr27 threads the bilayer. Residues Ala43–Leu72 form a disordered region. Helical transmembrane passes span Ile367–Phe387, Leu437–Leu457, Phe468–Met488, and Pro515–Val535.

This sequence belongs to the OXA1/ALB3/YidC family. Type 1 subfamily. In terms of assembly, interacts with the Sec translocase complex via SecD. Specifically interacts with transmembrane segments of nascent integral membrane proteins during membrane integration.

It localises to the cell inner membrane. Functionally, required for the insertion and/or proper folding and/or complex formation of integral membrane proteins into the membrane. Involved in integration of membrane proteins that insert both dependently and independently of the Sec translocase complex, as well as at least some lipoproteins. Aids folding of multispanning membrane proteins. This is Membrane protein insertase YidC from Pseudomonas fluorescens (strain SBW25).